Reading from the N-terminus, the 776-residue chain is 5-methyltetrahydropteroyltriglutamate--homocysteine methyltransferase (776 aa).

Residues 16 to 19 and Lys112 contribute to the 5-methyltetrahydropteroyltri-L-glutamate site; that span reads RELK. L-homocysteine contacts are provided by residues 435 to 437 and Glu488; that span reads IGS. L-methionine contacts are provided by residues 435-437 and Glu488; that span reads IGS. 5-methyltetrahydropteroyltri-L-glutamate contacts are provided by residues 519–520 and Trp565; that span reads RC. Asp603 provides a ligand contact to L-homocysteine. Asp603 lines the L-methionine pocket. Glu609 is a binding site for 5-methyltetrahydropteroyltri-L-glutamate. Residues His645, Cys647, and Glu669 each coordinate Zn(2+). His698 acts as the Proton donor in catalysis. Cys730 contributes to the Zn(2+) binding site.

It belongs to the vitamin-B12 independent methionine synthase family. The cofactor is Zn(2+).

The catalysed reaction is 5-methyltetrahydropteroyltri-L-glutamate + L-homocysteine = tetrahydropteroyltri-L-glutamate + L-methionine. It functions in the pathway amino-acid biosynthesis; L-methionine biosynthesis via de novo pathway; L-methionine from L-homocysteine (MetE route): step 1/1. In terms of biological role, catalyzes the transfer of a methyl group from 5-methyltetrahydrofolate to homocysteine resulting in methionine formation. The chain is 5-methyltetrahydropteroyltriglutamate--homocysteine methyltransferase from Ralstonia pickettii (strain 12J).